Consider the following 164-residue polypeptide: Pyruvoyl-dependent arginine decarboxylase (164 aa).

A Pyruvic acid (Ser) modification is found at Ser52.

It belongs to the PdaD family. The cofactor is pyruvate.

It carries out the reaction L-arginine + H(+) = agmatine + CO2. In Methanococcus maripaludis (strain C5 / ATCC BAA-1333), this protein is Pyruvoyl-dependent arginine decarboxylase.